We begin with the raw amino-acid sequence, 130 residues long: Keratin, high-sulfur matrix protein, IIIA3A (130 aa).

Wool.

The keratin products of mammalian epidermal derivatives such as wool and hair consist of microfibrils embedded in a rigid matrix of other proteins. The matrix proteins include the high-sulfur and high-tyrosine keratins, having molecular weights of 6-20 kDa, whereas the microfibrils contain the larger, low-sulfur keratins (40-56 kDa). In Ovis aries (Sheep), this protein is Keratin, high-sulfur matrix protein, IIIA3A.